Consider the following 949-residue polypeptide: Phosphocholine transferase AnkX (949 aa).

In terms of domain architecture, Fido spans 155–289 (LNPEQIPDLA…IFNTVEIIEQ (135 aa)). ANK repeat units lie at residues 391–420 (VGKTPAHLAVISGNMAMLDELIAKKADLSL), 424–453 (DGKTALHYAAECGNMQIMGKILKVVLSQED), 464–494 (HGKTAFHYAAEFGTPELISALTTTEVIQINE), 498–527 (SGSSAITLAYKNHKLKIFDELLNSGADISD), 554–583 (LNKEAFRIAISLGSVSLVKKFLRAGVDIDI), 588–617 (DKATPLMLSINSGNPKLVSYLLKKGANTRL), 658–687 (NGNPPLYNAVVVNDLKMATILLEMGARVDF), 691–720 (LGNNILHSAMRRCDLPIILDIVKKDSTLLH), 725–767 (ERRN…DLNK), and 771–800 (KGKTILDIALSKQYFHLCVKLMKAGAHTNI).

Its subcellular location is the secreted. It is found in the host cytoplasm. The catalysed reaction is [Rab1 protein]-L-serine + CDP-choline = [Rab1 protein]-O-phosphocholine-L-serine + CMP + H(+). Functionally, virulence effector that plays a role in hijacking the host vesicular trafficking by recruiting the small guanosine triphosphatase (GTPase) Rab1 to the cytosolic face of the Legionella-containing vacuole (LCVs). Acts as a phosphocholine transferase by mediating the addition of phosphocholine to Ser residues of host RAB1 (RAB1A, RAB1B or RAB1C) and RAB35, leading to displacement of GDP dissociation inhibitors (GDI). Phosphocholination of target proteins also impairs accessibility to GTPase effector LepB. Can act on both GDP-bound and GTP-bound Rab proteins. This chain is Phosphocholine transferase AnkX (ankX), found in Legionella pneumophila subsp. pneumophila (strain Philadelphia 1 / ATCC 33152 / DSM 7513).